The sequence spans 620 residues: 1-deoxy-D-xylulose-5-phosphate synthase (620 aa).

Residues His-80 and 121 to 123 (GHS) each bind thiamine diphosphate. Asp-152 serves as a coordination point for Mg(2+). Thiamine diphosphate-binding positions include 153 to 154 (GA), Asn-181, Tyr-288, and Glu-370. Position 181 (Asn-181) interacts with Mg(2+).

This sequence belongs to the transketolase family. DXPS subfamily. Homodimer. Requires Mg(2+) as cofactor. Thiamine diphosphate serves as cofactor.

The enzyme catalyses D-glyceraldehyde 3-phosphate + pyruvate + H(+) = 1-deoxy-D-xylulose 5-phosphate + CO2. It functions in the pathway metabolic intermediate biosynthesis; 1-deoxy-D-xylulose 5-phosphate biosynthesis; 1-deoxy-D-xylulose 5-phosphate from D-glyceraldehyde 3-phosphate and pyruvate: step 1/1. In terms of biological role, catalyzes the acyloin condensation reaction between C atoms 2 and 3 of pyruvate and glyceraldehyde 3-phosphate to yield 1-deoxy-D-xylulose-5-phosphate (DXP). The polypeptide is 1-deoxy-D-xylulose-5-phosphate synthase (Escherichia coli O157:H7).